We begin with the raw amino-acid sequence, 538 residues long: Carboxypeptidase 2 (538 aa).

The N-terminal stretch at 1-21 is a signal peptide; it reads MVAYRFLTLISLGLGSHCASA. An N-linked (GlcNAc...) asparagine glycan is attached at asparagine 46. Positions 53–76 are disordered; sequence PAFTSPGTVPRGFSDGTSGPTRDE. The 281-residue stretch at 71 to 351 folds into the Peptidase M14 domain; the sequence is GPTRDETMEG…VMVKSILQTA (281 aa). Residues histidine 136, glutamate 139, and histidine 224 each coordinate Zn(2+). Residue glutamate 322 is the Proton donor/acceptor of the active site. Asparagine 393 and asparagine 459 each carry an N-linked (GlcNAc...) asparagine glycan.

It belongs to the peptidase M14 family. Zn(2+) serves as cofactor.

The protein localises to the secreted. Its function is as follows. Extracellular metalloprotease that contributes to pathogenicity. This chain is Carboxypeptidase 2 (MCPB), found in Trichophyton tonsurans (Scalp ringworm fungus).